Consider the following 905-residue polypeptide: Isoleucine--tRNA ligase (905 aa).

The short motif at 56-66 is the 'HIGH' region element; sequence PYANGNIHMGT. Position 563 (Glu563) interacts with L-isoleucyl-5'-AMP. Positions 604–608 match the 'KMSKS' region motif; sequence KMSKS. ATP is bound at residue Lys607.

The protein belongs to the class-I aminoacyl-tRNA synthetase family. IleS type 1 subfamily. As to quaternary structure, monomer.

It is found in the cytoplasm. The enzyme catalyses tRNA(Ile) + L-isoleucine + ATP = L-isoleucyl-tRNA(Ile) + AMP + diphosphate. Functionally, catalyzes the attachment of isoleucine to tRNA(Ile). As IleRS can inadvertently accommodate and process structurally similar amino acids such as valine, to avoid such errors it has two additional distinct tRNA(Ile)-dependent editing activities. One activity is designated as 'pretransfer' editing and involves the hydrolysis of activated Val-AMP. The other activity is designated 'posttransfer' editing and involves deacylation of mischarged Val-tRNA(Ile). The sequence is that of Isoleucine--tRNA ligase from Pelagibacter ubique (strain HTCC1062).